The following is a 134-amino-acid chain: Small ribosomal subunit protein uS11 (134 aa).

It belongs to the universal ribosomal protein uS11 family. Part of the 30S ribosomal subunit. Interacts with proteins S7 and S18. Binds to IF-3.

Its function is as follows. Located on the platform of the 30S subunit, it bridges several disparate RNA helices of the 16S rRNA. Forms part of the Shine-Dalgarno cleft in the 70S ribosome. This chain is Small ribosomal subunit protein uS11, found in Leptothrix cholodnii (strain ATCC 51168 / LMG 8142 / SP-6) (Leptothrix discophora (strain SP-6)).